Here is a 943-residue protein sequence, read N- to C-terminus: Protein translocase subunit SecA (943 aa).

ATP contacts are provided by residues Q90, 108 to 112 (GEGKT), and D509. The tract at residues 534–576 (KPDNEHKPPIPQQRSSKAGGGFASKSESISNKNSKSSGASLFP) is disordered. The span at 556 to 570 (ASKSESISNKNSKSS) shows a compositional bias: low complexity.

The protein belongs to the SecA family. In terms of assembly, monomer and homodimer. Part of the essential Sec protein translocation apparatus which comprises SecA, SecYEG and auxiliary proteins SecDF. Other proteins may also be involved.

Its subcellular location is the cell inner membrane. It is found in the cellular thylakoid membrane. The protein resides in the cytoplasm. The catalysed reaction is ATP + H2O + cellular proteinSide 1 = ADP + phosphate + cellular proteinSide 2.. In terms of biological role, part of the Sec protein translocase complex. Interacts with the SecYEG preprotein conducting channel. Has a central role in coupling the hydrolysis of ATP to the transfer of proteins into and across the cell membrane, serving as an ATP-driven molecular motor driving the stepwise translocation of polypeptide chains across the membrane. Probably participates in protein translocation into and across both the cytoplasmic and thylakoid membranes in cyanobacterial cells. This chain is Protein translocase subunit SecA, found in Prochlorococcus marinus (strain MIT 9515).